The sequence spans 289 residues: Mas-related G-protein coupled receptor member G (289 aa).

The Extracellular segment spans residues 1-13 (MFSIFNIWGTFNK). A helical membrane pass occupies residues 14 to 34 (VLFFLSLTVSLAGLVGNALLL). Over 35–52 (WHLGLHIKKGPFNTYLLH) the chain is Cytoplasmic. A helical transmembrane segment spans residues 53 to 73 (LAAADFLFLSCQVGFSIATIV). The Extracellular portion of the chain corresponds to 74–78 (SGHED). Residues 79–99 (TLYFPVTFLWFAVGLWLLAAF) form a helical membrane-spanning segment. The Cytoplasmic segment spans residues 100–120 (SVDCCLAYMFPSFCSPNRRPR). A helical membrane pass occupies residues 121 to 141 (FTSVVLCLVIWALTMPAVLLP). Residues 142-164 (ANACGLLKNGMSLLVCLKYHWTS) lie on the Extracellular side of the membrane. A helical transmembrane segment spans residues 165–185 (VTWLAVLSGMACGASKFLLIF). The Cytoplasmic segment spans residues 186-199 (GNCCSSQPPPKFCK). Residues 200-220 (LAQCSGILLFFCRLPLVVYWC) form a helical membrane-spanning segment. Over 221 to 222 (LR) the chain is Extracellular. Residues 223–243 (PVLKFLLPFFFPLATLLACID) form a helical membrane-spanning segment. At 244–289 (SSAKPLLYYMKGRQLRKDPLQVALNRALGEESQSGLGGLSLPMHQV) the chain is on the cytoplasmic side.

It belongs to the G-protein coupled receptor 1 family. Mas subfamily.

The protein resides in the cell membrane. In terms of biological role, orphan receptor. May regulate nociceptor function and/or development, including the sensation or modulation of pain. The polypeptide is Mas-related G-protein coupled receptor member G (Mrgprg) (Mus musculus (Mouse)).